A 432-amino-acid polypeptide reads, in one-letter code: Glutamyl-tRNA reductase (432 aa).

Substrate contacts are provided by residues 49–52 (TCNR), serine 107, 112–114 (ETQ), and glutamine 118. Cysteine 50 acts as the Nucleophile in catalysis. 186 to 191 (GAGEMG) provides a ligand contact to NADP(+).

The protein belongs to the glutamyl-tRNA reductase family. As to quaternary structure, homodimer.

The catalysed reaction is (S)-4-amino-5-oxopentanoate + tRNA(Glu) + NADP(+) = L-glutamyl-tRNA(Glu) + NADPH + H(+). The protein operates within porphyrin-containing compound metabolism; protoporphyrin-IX biosynthesis; 5-aminolevulinate from L-glutamyl-tRNA(Glu): step 1/2. Catalyzes the NADPH-dependent reduction of glutamyl-tRNA(Glu) to glutamate 1-semialdehyde (GSA). This is Glutamyl-tRNA reductase from Campylobacter jejuni subsp. jejuni serotype O:2 (strain ATCC 700819 / NCTC 11168).